A 295-amino-acid chain; its full sequence is Elongation factor Ts (295 aa).

An involved in Mg(2+) ion dislocation from EF-Tu region spans residues 80–83 (TDFV).

It belongs to the EF-Ts family.

Its subcellular location is the cytoplasm. In terms of biological role, associates with the EF-Tu.GDP complex and induces the exchange of GDP to GTP. It remains bound to the aminoacyl-tRNA.EF-Tu.GTP complex up to the GTP hydrolysis stage on the ribosome. This chain is Elongation factor Ts, found in Lysinibacillus sphaericus (strain C3-41).